The sequence spans 427 residues: MFVDIAKIYVKAGDGGDGIVAFRREKYVPAGGPAGGDGGKGGDVIFVADRELNTLLDFKYKRHYKAQNGERGGPNNMHGKDGEDLIIKVPVGTVIKDAETGEIIADLSREGDRAIVAHGGRGGRGNAHFATATRQVPRFAEVGEKGDELWVILELKVLADVGLIGYPNVGKSTFLSVATNARPEIANYPFTTKYPNLGIVYISEGESFVLADIPGLIEGASEGAGLGHQFLRHVERTKVLIHIVDVSGSEGREPVEDFIKINEELKKYSPELAQKPQIVAANKMDLPDAQAYFELFKEEIEKMGYEVYPISAATGMGIREVLKRAYELLKQQKAAENIEEDAKPRTFVYYKKKDVKPLTVRKENGVYVVEGTVVEKVARNIVLNDHDSFRYFQNFLNKLGVFDKLREMGIQDGDIVRILDVEFEYYE.

Residues 1–158 (MFVDIAKIYV…LWVILELKVL (158 aa)) form the Obg domain. Residues 159 to 330 (ADVGLIGYPN…VLKRAYELLK (172 aa)) enclose the OBG-type G domain. Residues 165 to 172 (GYPNVGKS), 190 to 194 (FTTKY), 212 to 215 (DIPG), 282 to 285 (NKMD), and 311 to 313 (SAA) contribute to the GTP site. Ser-172 and Thr-192 together coordinate Mg(2+). The 81-residue stretch at 347–427 (FVYYKKKDVK…ILDVEFEYYE (81 aa)) folds into the OCT domain.

This sequence belongs to the TRAFAC class OBG-HflX-like GTPase superfamily. OBG GTPase family. Monomer. The cofactor is Mg(2+).

The protein resides in the cytoplasm. Its function is as follows. An essential GTPase which binds GTP, GDP and possibly (p)ppGpp with moderate affinity, with high nucleotide exchange rates and a fairly low GTP hydrolysis rate. Plays a role in control of the cell cycle, stress response, ribosome biogenesis and in those bacteria that undergo differentiation, in morphogenesis control. The protein is GTPase Obg of Caldicellulosiruptor saccharolyticus (strain ATCC 43494 / DSM 8903 / Tp8T 6331).